The sequence spans 55 residues: Cortexin domain containing 2 (55 aa).

Residues 16 to 36 (FAIAFVVLLFLFLIVMIFRCA) form a helical membrane-spanning segment.

The protein resides in the membrane. This Homo sapiens (Human) protein is Cortexin domain containing 2.